A 221-amino-acid chain; its full sequence is Serine/arginine-rich splicing factor 2 (221 aa).

Position 2 is an N-acetylserine (Ser2). A Phosphoserine modification is found at Ser2. Residues 14-92 (TSLKVDNLTY…RELRVQMARY (79 aa)) enclose the RRM domain. Phosphothreonine occurs at positions 22 and 25. Residue Ser26 is modified to Phosphoserine. Lys52 is subject to N6-acetyllysine. Positions 92-221 (YGRPPDSHHS…SPEEEGAVSS (130 aa)) are disordered. Composition is skewed to basic residues over residues 117 to 171 (RRSR…RSKS) and 179 to 189 (SRSRSRSRSRS). 7 positions are modified to phosphoserine: Ser189, Ser191, Ser204, Ser206, Ser208, Ser212, and Ser220.

It belongs to the splicing factor SR family. As to quaternary structure, in vitro, self-associates and binds SRSF1/SFRS1 (ASF/SF2), SNRNP70 and U2AF1 but not U2AF2. Binds SREK1/SFRS12. Interacts with CCNL1 and CCNL2. Interacts with SCAF11. Interacts with ZRSR2/U2AF1-RS2. Interacts with CCDC55 (via C-terminus). Interacts with BRDT. In terms of processing, extensively phosphorylated on serine residues in the RS domain. Phosphorylated by SRPK2 and this causes its redistribution from the nuclear speckle to nucleoplasm and controls cell fate decision in response to cisplatin treatment. KAT5/TIP60 inhibits its phosphorylation by preventing SRPK2 nuclear translocation. Acetylation on Lys-52 by KAT5/TIP60 promotes its proteasomal degradation. This effect is counterbalanced by HDAC6, which positively controls SRSF2 protein level by deacetylating it and preventing its proteasomal degradation.

Its subcellular location is the nucleus. It localises to the nucleoplasm. The protein resides in the nucleus speckle. Functionally, necessary for the splicing of pre-mRNA. It is required for formation of the earliest ATP-dependent splicing complex and interacts with spliceosomal components bound to both the 5'- and 3'-splice sites during spliceosome assembly. It also is required for ATP-dependent interactions of both U1 and U2 snRNPs with pre-mRNA. Interacts with other spliceosomal components, via the RS domains, to form a bridge between the 5'- and 3'-splice site binding components, U1 snRNP and U2AF. Binds to purine-rich RNA sequences, either 5'-AGSAGAGTA-3' (S=C or G) or 5'-GTTCGAGTA-3'. Can bind to beta-globin mRNA and commit it to the splicing pathway. The phosphorylated form (by SRPK2) is required for cellular apoptosis in response to cisplatin treatment. The protein is Serine/arginine-rich splicing factor 2 (SRSF2) of Sus scrofa (Pig).